The chain runs to 97 residues: Integration host factor subunit alpha (97 aa).

It belongs to the bacterial histone-like protein family. As to quaternary structure, heterodimer of an alpha and a beta chain.

Its function is as follows. This protein is one of the two subunits of integration host factor, a specific DNA-binding protein that functions in genetic recombination as well as in transcriptional and translational control. In Hydrogenovibrio crunogenus (strain DSM 25203 / XCL-2) (Thiomicrospira crunogena), this protein is Integration host factor subunit alpha.